The chain runs to 235 residues: tRNA (guanine-N(1)-)-methyltransferase (235 aa).

Residues glycine 112 and 132–137 each bind S-adenosyl-L-methionine; that span reads IGDYVI.

The protein belongs to the RNA methyltransferase TrmD family. Homodimer.

It is found in the cytoplasm. The catalysed reaction is guanosine(37) in tRNA + S-adenosyl-L-methionine = N(1)-methylguanosine(37) in tRNA + S-adenosyl-L-homocysteine + H(+). Its function is as follows. Specifically methylates guanosine-37 in various tRNAs. This is tRNA (guanine-N(1)-)-methyltransferase from Anaplasma marginale (strain St. Maries).